Reading from the N-terminus, the 176-residue chain is V-type proton ATPase 16 kDa proteolipid subunit (176 aa).

Residues 1 to 17 lie on the Lumenal side of the membrane; that stretch reads MSVLLRSVTELCPVYSP. The helical transmembrane segment at 18 to 38 threads the bilayer; sequence FFGSMGITASIVFTVFGGAYG. Topologically, residues 39–62 are cytoplasmic; that stretch reads TAKSSVGISSVGVMKPEFIMRSLF. A helical membrane pass occupies residues 63–83; sequence PVVFAGVIGLYGLIVCIVLFI. Topologically, residues 84 to 98 are lumenal; sequence NVNKSEYSLNRAFLD. The helical transmembrane segment at 99–119 threads the bilayer; that stretch reads LGAGLTCGLCGLASGMSIGIS. Topologically, residues 120–136 are cytoplasmic; sequence GDCGVRGAAQQPKLFVS. A helical membrane pass occupies residues 137–157; sequence MLICLIFSEALALYGFIVALI. Residues 158–176 are Lumenal-facing; it reads MAATGDNSCVATASTSSSS.

It belongs to the V-ATPase proteolipid subunit family. V-ATPase is a heteromultimeric enzyme composed of a peripheral catalytic V1 complex (main components: subunits A, B, C, D, E, and F) attached to an integral membrane V0 proton pore complex (main component: the proteolipid protein; which is present as a hexamer that forms the proton-conducting pore).

The protein resides in the vacuole membrane. In terms of biological role, proton-conducting pore forming subunit of the membrane integral V0 complex of vacuolar ATPase. V-ATPase is responsible for acidifying a variety of intracellular compartments in eukaryotic cells. This chain is V-type proton ATPase 16 kDa proteolipid subunit (VMA3), found in Entamoeba dispar.